A 153-amino-acid chain; its full sequence is Small ribosomal subunit protein uS17 (153 aa).

This sequence belongs to the universal ribosomal protein uS17 family.

The sequence is that of Small ribosomal subunit protein uS17 (RpS11) from Anopheles gambiae (African malaria mosquito).